Consider the following 454-residue polypeptide: ABSCISIC ACID-INSENSITIVE 5-like protein 6 (454 aa).

Phosphoserine is present on residues Ser32, Ser55, and Ser126. At Thr169 the chain carries Phosphothreonine. One can recognise a bZIP domain in the interval 372-435; the sequence is IERRQKRMIK…KNQLLEPLRQ (64 aa). Residues 374-393 are basic motif; the sequence is RRQKRMIKNRESAARSRARK. A leucine-zipper region spans residues 400–414; sequence LEAEIAQLKELNEEL.

Belongs to the bZIP family. ABI5 subfamily. In terms of assembly, DNA-binding heterodimer. Interacts with ABI3 and the AFP proteins AFP1, AFP2, AFP3 and AFP4. As to expression, expressed in roots and flowers.

Its subcellular location is the nucleus. Functionally, binds to the ABA-responsive element (ABRE). Mediates stress-responsive ABA signaling. This is ABSCISIC ACID-INSENSITIVE 5-like protein 6 (ABF3) from Arabidopsis thaliana (Mouse-ear cress).